We begin with the raw amino-acid sequence, 558 residues long: SPATS2-like protein (558 aa).

A2 is modified (N-acetylalanine). Basic residues predominate over residues G63–Q79. The disordered stretch occupies residues G63–A204. 2 stretches are compositionally biased toward basic and acidic residues: residues G80–E92 and G110–R142. The residue at position 120 (S120) is a Phosphoserine. Positions K279–L344 form a coiled coil. 2 disordered regions span residues G385 to K406 and T421 to A514. Polar residues predominate over residues T421–S433. Residues H469–G485 are compositionally biased toward basic residues.

Belongs to the SPATS2 family.

It localises to the cytoplasm. The protein resides in the nucleus. The protein localises to the nucleolus. The polypeptide is SPATS2-like protein (Spats2l) (Mus musculus (Mouse)).